A 451-amino-acid chain; its full sequence is Tubulin alpha chain (451 aa).

Glutamine 11 contacts GTP. Lysine 40 is subject to N6-acetyllysine. 6 residues coordinate GTP: glutamate 71, glycine 144, threonine 145, threonine 179, asparagine 206, and asparagine 228. Glutamate 71 serves as a coordination point for Mg(2+). The active site involves glutamate 254.

This sequence belongs to the tubulin family. As to quaternary structure, dimer of alpha and beta chains. A typical microtubule is a hollow water-filled tube with an outer diameter of 25 nm and an inner diameter of 15 nM. Alpha-beta heterodimers associate head-to-tail to form protofilaments running lengthwise along the microtubule wall with the beta-tubulin subunit facing the microtubule plus end conferring a structural polarity. Microtubules usually have 13 protofilaments but different protofilament numbers can be found in some organisms and specialized cells. The cofactor is Mg(2+). In terms of processing, undergoes a tyrosination/detyrosination cycle, the cyclic removal and re-addition of a C-terminal tyrosine residue by the enzymes tubulin tyrosine carboxypeptidase (TTCP) and tubulin tyrosine ligase (TTL), respectively. Acetylation of alpha chains at Lys-40 stabilizes microtubules and affects affinity and processivity of microtubule motors. This modification has a role in multiple cellular functions, ranging from cell motility, cell cycle progression or cell differentiation to intracellular trafficking and signaling.

It is found in the cytoplasm. It localises to the cytoskeleton. It catalyses the reaction GTP + H2O = GDP + phosphate + H(+). Tubulin is the major constituent of microtubules, a cylinder consisting of laterally associated linear protofilaments composed of alpha- and beta-tubulin heterodimers. Microtubules grow by the addition of GTP-tubulin dimers to the microtubule end, where a stabilizing cap forms. Below the cap, tubulin dimers are in GDP-bound state, owing to GTPase activity of alpha-tubulin. The polypeptide is Tubulin alpha chain (TUBA) (Triticum aestivum (Wheat)).